We begin with the raw amino-acid sequence, 161 residues long: Dehydrin DHN3 (161 aa).

The segment covering 1–12 (MEHGHATNRVDE) has biased composition (basic and acidic residues). The interval 1–161 (MEHGHATNRV…KIKEKLPGQH (161 aa)) is disordered. A compositionally biased stretch (gly residues) spans 20 to 38 (HGVGTGMGAHGGVGTGAAA). 2 stretches are compositionally biased toward low complexity: residues 93–107 (DQQQ…HGHT) and 115–130 (HGAT…QGHT). A run of 2 repeats spans residues 101–123 (YGQH…TGGT) and 124–144 (YGQQ…DGTG). The segment at 101-144 (YGQHGHTGMTGTGEHGATATGGTYGQQGHTGMTGTGAHGTDGTG) is 2 X approximate tandem repeats. Residues 131–142 (GMTGTGAHGTDG) are compositionally biased toward gly residues. Positions 143-161 (TGEKKGIMDKIKEKLPGQH) are enriched in basic and acidic residues.

This sequence belongs to the plant dehydrin family.

This chain is Dehydrin DHN3 (DHN3), found in Hordeum vulgare (Barley).